Reading from the N-terminus, the 135-residue chain is ATP synthase epsilon chain (135 aa).

This sequence belongs to the ATPase epsilon chain family. In terms of assembly, F-type ATPases have 2 components, CF(1) - the catalytic core - and CF(0) - the membrane proton channel. CF(1) has five subunits: alpha(3), beta(3), gamma(1), delta(1), epsilon(1). CF(0) has three main subunits: a, b and c.

The protein resides in the cell inner membrane. Functionally, produces ATP from ADP in the presence of a proton gradient across the membrane. The sequence is that of ATP synthase epsilon chain from Granulibacter bethesdensis (strain ATCC BAA-1260 / CGDNIH1).